Here is a 164-residue protein sequence, read N- to C-terminus: Phosphopantetheine adenylyltransferase (164 aa).

Residue serine 9 coordinates substrate. ATP contacts are provided by residues 9–10 (SF) and histidine 17. The substrate site is built by lysine 41, valine 78, and arginine 92. ATP is bound by residues 93-95 (GLR), glutamate 103, and 128-134 (SRPITAT).

This sequence belongs to the bacterial CoaD family. Homohexamer. It depends on Mg(2+) as a cofactor.

It is found in the cytoplasm. It carries out the reaction (R)-4'-phosphopantetheine + ATP + H(+) = 3'-dephospho-CoA + diphosphate. It participates in cofactor biosynthesis; coenzyme A biosynthesis; CoA from (R)-pantothenate: step 4/5. Its function is as follows. Reversibly transfers an adenylyl group from ATP to 4'-phosphopantetheine, yielding dephospho-CoA (dPCoA) and pyrophosphate. The protein is Phosphopantetheine adenylyltransferase of Rhizobium leguminosarum bv. trifolii (strain WSM2304).